Here is a 508-residue protein sequence, read N- to C-terminus: Bifunctional purine biosynthesis protein PurH (508 aa).

Residues 1–145 enclose the MGS-like domain; that stretch reads MIKRALLSTY…KNYKDVIVVV (145 aa).

Belongs to the PurH family.

The enzyme catalyses (6R)-10-formyltetrahydrofolate + 5-amino-1-(5-phospho-beta-D-ribosyl)imidazole-4-carboxamide = 5-formamido-1-(5-phospho-D-ribosyl)imidazole-4-carboxamide + (6S)-5,6,7,8-tetrahydrofolate. It catalyses the reaction IMP + H2O = 5-formamido-1-(5-phospho-D-ribosyl)imidazole-4-carboxamide. It functions in the pathway purine metabolism; IMP biosynthesis via de novo pathway; 5-formamido-1-(5-phospho-D-ribosyl)imidazole-4-carboxamide from 5-amino-1-(5-phospho-D-ribosyl)imidazole-4-carboxamide (10-formyl THF route): step 1/1. It participates in purine metabolism; IMP biosynthesis via de novo pathway; IMP from 5-formamido-1-(5-phospho-D-ribosyl)imidazole-4-carboxamide: step 1/1. The polypeptide is Bifunctional purine biosynthesis protein PurH (Petrotoga mobilis (strain DSM 10674 / SJ95)).